We begin with the raw amino-acid sequence, 145 residues long: Mitochondrial import receptor subunit TOM20 homolog (145 aa).

The Mitochondrial intermembrane portion of the chain corresponds to Met-1–Ser-6. The chain crosses the membrane as a helical span at residues Ala-7 to Phe-24. At Asp-25–Glu-145 the chain is on the cytoplasmic side. Residues Lys-35, Lys-56, Lys-61, and Lys-68 each participate in a glycyl lysine isopeptide (Lys-Gly) (interchain with G-Cter in ubiquitin) cross-link. Ser-135 and Ser-138 each carry phosphoserine.

This sequence belongs to the Tom20 family. In terms of assembly, forms part of the preprotein translocase complex of the outer mitochondrial membrane (TOM complex) which consists of at least 7 different proteins (TOMM5, TOMM6, TOMM7, TOMM20, TOMM22, TOMM40 and TOMM70). Interacts with TOM22. Interacts with APEX1. Interacts with TBC1D21. Upon mitochondrial depolarization, interacts with PINK1; the interaction is required for PINK1-TOM-TIM23 supercomplex formation which is critical for PINK1 stabilization at the outer mitochondrial membrane, kinase activation and downstream mitophagy. In terms of processing, ubiquitinated by PRKN during mitophagy, leading to its degradation and enhancement of mitophagy. Deubiquitinated by USP30.

The protein localises to the mitochondrion outer membrane. Functionally, central component of the receptor complex responsible for the recognition and translocation of cytosolically synthesized mitochondrial preproteins. Together with TOM22 functions as the transit peptide receptor at the surface of the mitochondrion outer membrane and facilitates the movement of preproteins into the TOM40 translocation pore. Required for the translocation across the mitochondrial outer membrane of cytochrome P450 monooxygenases. This Bos taurus (Bovine) protein is Mitochondrial import receptor subunit TOM20 homolog (TOMM20).